Reading from the N-terminus, the 76-residue chain is Protein CsbA (76 aa).

The Extracellular segment spans residues Met-1–Ala-5. The chain crosses the membrane as a helical span at residues Val-6–Val-22. At Thr-23 to Tyr-27 the chain is on the cytoplasmic side. The chain crosses the membrane as a helical span at residues Val-28–Gly-44. At Tyr-45–Tyr-49 the chain is on the extracellular side. A helical transmembrane segment spans residues Phe-50–Met-66. The Cytoplasmic portion of the chain corresponds to Ala-67–Glu-76.

It is found in the cell membrane. This chain is Protein CsbA (csbA), found in Bacillus subtilis (strain 168).